The sequence spans 124 residues: Small ribosomal subunit protein uS12 (124 aa).

Position 89 is a 3-methylthioaspartic acid (Asp-89).

It belongs to the universal ribosomal protein uS12 family. Part of the 30S ribosomal subunit. Contacts proteins S8 and S17. May interact with IF1 in the 30S initiation complex.

In terms of biological role, with S4 and S5 plays an important role in translational accuracy. Functionally, interacts with and stabilizes bases of the 16S rRNA that are involved in tRNA selection in the A site and with the mRNA backbone. Located at the interface of the 30S and 50S subunits, it traverses the body of the 30S subunit contacting proteins on the other side and probably holding the rRNA structure together. The combined cluster of proteins S8, S12 and S17 appears to hold together the shoulder and platform of the 30S subunit. The sequence is that of Small ribosomal subunit protein uS12 from Vibrio vulnificus (strain CMCP6).